A 336-amino-acid chain; its full sequence is Phenylalanine--tRNA ligase alpha subunit (336 aa).

Glu-263 provides a ligand contact to Mg(2+).

The protein belongs to the class-II aminoacyl-tRNA synthetase family. Phe-tRNA synthetase alpha subunit type 1 subfamily. In terms of assembly, tetramer of two alpha and two beta subunits. It depends on Mg(2+) as a cofactor.

The protein localises to the cytoplasm. It catalyses the reaction tRNA(Phe) + L-phenylalanine + ATP = L-phenylalanyl-tRNA(Phe) + AMP + diphosphate + H(+). The polypeptide is Phenylalanine--tRNA ligase alpha subunit (Thermosynechococcus vestitus (strain NIES-2133 / IAM M-273 / BP-1)).